Reading from the N-terminus, the 236-residue chain is Small ribosomal subunit protein uS2c (236 aa).

It belongs to the universal ribosomal protein uS2 family.

It localises to the plastid. The protein localises to the chloroplast. In Amborella trichopoda, this protein is Small ribosomal subunit protein uS2c (rps2).